Reading from the N-terminus, the 594-residue chain is MATPYPRSGGRGEVKCGGGRGAGVPWDFLPGLMVKAPPGPCLQAQRKEKSRNAARWRRGKENLEFFELAKLLPLPGAISSQLDKASIVRLSVTYLRLRRFAALGAPPWGLRAVGPPAGLAPGRRGPVALVSEVFEQHLGGHILQSLDGFVFALNQEGKFLYISETVSIYLGLSQVELTGSSVFDYIHPGDHSEVLEQLGLRAASIGPPTPPSVSSSSSSSSSSLVDTPEIEASPTEASPAFRAQERSFFVRMKSTLTKRGLNVKASGYKVIHVTGRLRARALGLVALGHTLPPAPLAELPLHGHMIVFRLSLGLTILACESRVSDHMDMGPSELVGRSCYQFVHGQDATRIRQSHLDLLDKGQVVTGYYRWLQRAGGFVWLQSVATVAGNGKSTGEHHVLWVSHVLSNAEGSQTPLDAFQLPAIVSQEEPSRPGPEPTEEEPPVDGKQAVPADQDKDKDPQARGKRIKVEASPKEARGSEDSGEEELSDPPAPPRPEFTSVIRAGALKHDPVLPWGLTTPGDPSPALLHAGFLPPVVRGLCTPGTIRYGPAELSLMYPHLHRLGAGPSLPEAFYPTLGLPYPGPTGTRVQRKGD.

Residues Q45–R98 form the bHLH domain. One can recognise a PAS 1 domain in the interval E135–I205. The tract at residues G206–A237 is disordered. Low complexity predominate over residues S212–S223. Residues A294–D360 form the PAS 2 domain. The PAC domain maps to T366–A409. Residues Q427–F498 form a disordered region. Over residues D453–E480 the composition is skewed to basic and acidic residues.

In terms of assembly, efficient DNA binding requires dimerization with another bHLH protein. Interacts with ARNT; forms a heterodimer that binds core DNA sequence 5'-[AG]CGTG-3' within the hypoxia response element (HRE) leading to a transcriptional repressor on its target gene TH. Expressed in brain in inhibitory interneurons. Also found in spinal cord.

The protein resides in the nucleus. May control regulatory pathways relevant to schizophrenia and to psychotic illness. May play a role in late central nervous system development by modulating EPO expression in response to cellular oxygen level. Forms a heterodimer that binds core DNA sequence 5'-TACGTG-3' within the hypoxia response element (HRE) leading to transcriptional repression on its target gene TH. The polypeptide is Neuronal PAS domain-containing protein 1 (Npas1) (Mus musculus (Mouse)).